The chain runs to 363 residues: Molybdenum import ATP-binding protein ModC (363 aa).

The 232-residue stretch at 1–232 (MLDLDLRRRQ…PGLRPLTGRY (232 aa)) folds into the ABC transporter domain. ATP is bound at residue 30–37 (GRSGSGKT). Residues 292–358 (RVSIRNVLPA…IKALTIARGD (67 aa)) form the Mop domain.

Belongs to the ABC transporter superfamily. Molybdate importer (TC 3.A.1.8) family. As to quaternary structure, the complex is composed of two ATP-binding proteins (ModC), two transmembrane proteins (ModB) and a solute-binding protein (ModA).

The protein localises to the cell inner membrane. The catalysed reaction is molybdate(out) + ATP + H2O = molybdate(in) + ADP + phosphate + H(+). Its function is as follows. Part of the ABC transporter complex ModABC involved in molybdenum import. Responsible for energy coupling to the transport system. The polypeptide is Molybdenum import ATP-binding protein ModC (Paramagnetospirillum magneticum (strain ATCC 700264 / AMB-1) (Magnetospirillum magneticum)).